The primary structure comprises 227 residues: GRF-interacting factor 1 (227 aa).

The span at 124–139 (ALSPLQQQQQQQAAAA) shows a compositional bias: low complexity. Disordered regions lie at residues 124–160 (ALSP…LHGE) and 188–227 (GGGG…EEGS). Positions 217–227 (EYLKGTEEEGS) are enriched in basic and acidic residues.

Belongs to the SS18 family. Interacts with GRF4. In terms of tissue distribution, highly expressed in internodes, nodes, developing spikelets and developing anthers. Expressed at low levels in roots and mature glumes.

The protein localises to the nucleus. Its subcellular location is the cytoplasm. Its function is as follows. Transcription coactivator that plays a role in the regulation of meristematic function in leaves, stems and inflorescences. May regulate leaf size, length of stem internodes, and seed size by promoting cell expansion. Transcription coactivator that plays a role in the regulation of grain size. Component of a network formed by the microRNA396 (miRNA396), the GRFs and their interacting factors (GIFs) acting in the regulation of meristem function, at least partially through the control of cell proliferation. Component of the miRNA396c-GRF4-GIF1 regulatory module that plays an important role in grain size determination. This Oryza sativa subsp. japonica (Rice) protein is GRF-interacting factor 1.